A 931-amino-acid polypeptide reads, in one-letter code: Neuropilin-2 (931 aa).

A signal peptide spans 1–20 (MDMFPLTWVFLALYFSGHEV). The Extracellular portion of the chain corresponds to 21 to 864 (RSQQDPPCGG…EKSWLYTLDP (844 aa)). Intrachain disulfides connect Cys-28-Cys-55, Cys-83-Cys-105, and Cys-149-Cys-175. 2 CUB domains span residues 28–142 (CGGR…YEIF) and 149–267 (CSKN…YYLI). Asn-152 and Asn-157 each carry an N-linked (GlcNAc...) asparagine glycan. The Ca(2+) site is built by Glu-197, Asp-211, and Asp-252. The cysteines at positions 208 and 230 are disulfide-linked. Disulfide bonds link Cys-277/Cys-427 and Cys-434/Cys-592. F5/8 type C domains are found at residues 277–427 (CNVP…LFGC) and 434–592 (CSNM…VLGC). Positions 298 to 310 (TFSDGRWTPQQSR) are enriched in polar residues. The disordered stretch occupies residues 298–317 (TFSDGRWTPQQSRLHGDDNG). The interval 601 to 621 (VETLGPTVKSEETTTPYPMDE) is disordered. Residue Asn-629 is glycosylated (N-linked (GlcNAc...) asparagine). Positions 642 to 802 (SGFNCNFDFP…TDVPLENCME (161 aa)) constitute an MAM domain. The segment at 819-854 (THGGEGYEDEIDDEYEGDWSNSSSSTSGAGDPSSGK) is disordered. Over residues 824-835 (GYEDEIDDEYEG) the composition is skewed to acidic residues. Residues 836–851 (DWSNSSSSTSGAGDPS) show a composition bias toward low complexity. N-linked (GlcNAc...) asparagine glycosylation is present at Asn-839. The chain crosses the membrane as a helical span at residues 865–889 (ILITIIAMSSLGVLLGATCAGLLLY). Residues 890–931 (CTCSYSGLSSRSCTTLENYNFELYDGLKHKVKINHQKCCSEA) are Cytoplasmic-facing.

It belongs to the neuropilin family. As to quaternary structure, heterodimer with NRP1. Binds PLXNB1. As to expression, expressed in developing CNS, PNS and in some nonneural tissues including limb buds, developing bones, muscles, intestinal epithelium, kidney, lung and submandibular gland.

It is found in the membrane. High affinity receptor for semaphorins 3C, 3F, VEGF-165 and VEGF-145 isoforms of VEGF, and the PLGF-2 isoform of PGF. This Mus musculus (Mouse) protein is Neuropilin-2 (Nrp2).